Here is a 257-residue protein sequence, read N- to C-terminus: ECF RNA polymerase sigma factor SigE (257 aa).

Positions 87–153 (LVRQHADRVY…FLDMVRRRAR (67 aa)) are sigma-70 factor domain-2. Positions 111-114 (DLTQ) match the Polymerase core binding motif. A sigma-70 factor domain-4 region spans residues 186–236 (LQAALASLPPEFRAAVVLCDIEGLSYEEIGATLGVKLGTVRSRIHRGRQAL). Residues 211 to 230 (YEEIGATLGVKLGTVRSRIH) constitute a DNA-binding region (H-T-H motif).

The protein belongs to the sigma-70 factor family. ECF subfamily. Interacts transiently with the RNA polymerase catalytic core formed by RpoA, RpoB, RpoC and RpoZ (2 alpha, 1 beta, 1 beta' and 1 omega subunit) to form the RNA polymerase holoenzyme that can initiate transcription. Interacts (via sigma-70 factor domain 4) with cognate anti-sigma-E factor RseA under reducing conditions, which stops the sigma factor from functioning.

Functionally, sigma factors are initiation factors that promote the attachment of RNA polymerase to specific initiation sites and are then released. Extracytoplasmic function (ECF) sigma factors are held in an inactive form by an anti-sigma factor until released. Responds to surface stress (H(2)O(2)). In Mycobacterium tuberculosis (strain ATCC 35801 / TMC 107 / Erdman), this protein is ECF RNA polymerase sigma factor SigE (sigE).